Here is a 259-residue protein sequence, read N- to C-terminus: Ribosomal RNA small subunit methyltransferase J (259 aa).

S-adenosyl-L-methionine is bound by residues 109-110, 125-126, 161-162, and Asp-179; these read RD, ER, and SS.

Belongs to the methyltransferase superfamily. RsmJ family.

It localises to the cytoplasm. It catalyses the reaction guanosine(1516) in 16S rRNA + S-adenosyl-L-methionine = N(2)-methylguanosine(1516) in 16S rRNA + S-adenosyl-L-homocysteine + H(+). Specifically methylates the guanosine in position 1516 of 16S rRNA. The protein is Ribosomal RNA small subunit methyltransferase J of Shewanella putrefaciens (strain CN-32 / ATCC BAA-453).